Consider the following 101-residue polypeptide: Large ribosomal subunit protein uL23 (101 aa).

It belongs to the universal ribosomal protein uL23 family. Part of the 50S ribosomal subunit. Contacts protein L29, and trigger factor when it is bound to the ribosome.

Its function is as follows. One of the early assembly proteins it binds 23S rRNA. One of the proteins that surrounds the polypeptide exit tunnel on the outside of the ribosome. Forms the main docking site for trigger factor binding to the ribosome. The polypeptide is Large ribosomal subunit protein uL23 (Corynebacterium efficiens (strain DSM 44549 / YS-314 / AJ 12310 / JCM 11189 / NBRC 100395)).